The following is a 349-amino-acid chain: Protein RecA (349 aa).

A phosphate-binding site is contributed by 71–75 (SSGKT). ATP-binding positions include 71–76 (SSGKTT) and 102–105 (DPEY). Residue glutamine 196 participates in phosphate binding.

The protein belongs to the RecA family. As to quaternary structure, polymerizes non-specifically on ssDNA to form filaments. Interacts with and activates LexA leading to autocatalytic cleavage of LexA, which derepresses the SOS regulon and activates DNA repair.

It localises to the cytoplasm. In terms of biological role, required for homologous recombination (HR) and the bypass of mutagenic DNA lesions (double strand breaks, DSB) by the SOS response. Can catalyze the hydrolysis of ATP in the presence of single-stranded DNA, the ATP-dependent uptake of single-stranded DNA by duplex DNA, and the ATP-dependent hybridization of homologous single-stranded DNAs. Numerous X-ray crystals have been resolved under different conditions which indicate the flexibility of the protein, essential to its function. Gln-196 contributes to this plasticity by acting as a switch residue, which transmits the effect of nucleotide binding to the DNA-binding region. The polypeptide is Protein RecA (Mycolicibacterium smegmatis (strain ATCC 700084 / mc(2)155) (Mycobacterium smegmatis)).